Reading from the N-terminus, the 106-residue chain is Nucleoid-associated protein Fjoh_2555 (106 aa).

It belongs to the YbaB/EbfC family. In terms of assembly, homodimer.

It is found in the cytoplasm. It localises to the nucleoid. In terms of biological role, binds to DNA and alters its conformation. May be involved in regulation of gene expression, nucleoid organization and DNA protection. In Flavobacterium johnsoniae (strain ATCC 17061 / DSM 2064 / JCM 8514 / BCRC 14874 / CCUG 350202 / NBRC 14942 / NCIMB 11054 / UW101) (Cytophaga johnsonae), this protein is Nucleoid-associated protein Fjoh_2555.